A 228-amino-acid chain; its full sequence is Probable septum site-determining protein MinC (228 aa).

The protein belongs to the MinC family. As to quaternary structure, interacts with MinD and FtsZ.

Cell division inhibitor that blocks the formation of polar Z ring septums. Rapidly oscillates between the poles of the cell to destabilize FtsZ filaments that have formed before they mature into polar Z rings. Prevents FtsZ polymerization. In Pectobacterium carotovorum subsp. carotovorum (strain PC1), this protein is Probable septum site-determining protein MinC.